The primary structure comprises 200 residues: ATP-dependent Clp protease proteolytic subunit 2 (200 aa).

Ser101 (nucleophile) is an active-site residue. Residue His126 is part of the active site.

Belongs to the peptidase S14 family. As to quaternary structure, fourteen ClpP subunits assemble into 2 heptameric rings which stack back to back to give a disk-like structure with a central cavity, resembling the structure of eukaryotic proteasomes.

Its subcellular location is the cytoplasm. The enzyme catalyses Hydrolysis of proteins to small peptides in the presence of ATP and magnesium. alpha-casein is the usual test substrate. In the absence of ATP, only oligopeptides shorter than five residues are hydrolyzed (such as succinyl-Leu-Tyr-|-NHMec, and Leu-Tyr-Leu-|-Tyr-Trp, in which cleavage of the -Tyr-|-Leu- and -Tyr-|-Trp bonds also occurs).. In terms of biological role, cleaves peptides in various proteins in a process that requires ATP hydrolysis. Has a chymotrypsin-like activity. Plays a major role in the degradation of misfolded proteins. In Prochlorococcus marinus (strain MIT 9313), this protein is ATP-dependent Clp protease proteolytic subunit 2.